We begin with the raw amino-acid sequence, 182 residues long: UPF0397 protein SPT_0523 (182 aa).

5 helical membrane-spanning segments follow: residues 10–30 (VVAV…NIPT), 46–66 (LLSI…GHAI), 73–93 (YGLW…VGLF), 109–129 (ILIF…VLAP), and 148–168 (IVAG…LLLA).

The protein belongs to the UPF0397 family.

It is found in the cell membrane. The polypeptide is UPF0397 protein SPT_0523 (Streptococcus pneumoniae (strain Taiwan19F-14)).